The following is an 815-amino-acid chain: DNA topoisomerase 1 (815 aa).

A Toprim domain is found at 3 to 119; sequence KHLLIVESPA…QRIVFTEITP (117 aa). Glu-9 and Asp-82 together coordinate Mg(2+). One can recognise a Topo IA-type catalytic domain in the interval 133-573; that stretch reads ASDLVDAQQA…KFWVPFKELV (441 aa). The segment at 167–172 is interaction with DNA; the sequence is SAGRVQ. The active-site O-(5'-phospho-DNA)-tyrosine intermediate is the Tyr-308. The tract at residues 760 to 815 is disordered; the sequence is GKPARKNFSTKKTATKNETRKQTTKKRTTDAKATKKVSDKPVKKQIKKRIAPNITE. The span at 774 to 801 shows a compositional bias: basic and acidic residues; it reads TKNETRKQTTKKRTTDAKATKKVSDKPV.

It belongs to the type IA topoisomerase family. Monomer. Mg(2+) is required as a cofactor.

The catalysed reaction is ATP-independent breakage of single-stranded DNA, followed by passage and rejoining.. Functionally, releases the supercoiling and torsional tension of DNA, which is introduced during the DNA replication and transcription, by transiently cleaving and rejoining one strand of the DNA duplex. Introduces a single-strand break via transesterification at a target site in duplex DNA. The scissile phosphodiester is attacked by the catalytic tyrosine of the enzyme, resulting in the formation of a DNA-(5'-phosphotyrosyl)-enzyme intermediate and the expulsion of a 3'-OH DNA strand. The free DNA strand then undergoes passage around the unbroken strand, thus removing DNA supercoils. Finally, in the religation step, the DNA 3'-OH attacks the covalent intermediate to expel the active-site tyrosine and restore the DNA phosphodiester backbone. This chain is DNA topoisomerase 1, found in Xylella fastidiosa (strain 9a5c).